Here is a 307-residue protein sequence, read N- to C-terminus: Putative S-adenosyl-L-methionine-dependent methyltransferase MMAR_4570 (307 aa).

S-adenosyl-L-methionine is bound by residues D128 and D157 to L158.

This sequence belongs to the UPF0677 family.

In terms of biological role, exhibits S-adenosyl-L-methionine-dependent methyltransferase activity. The chain is Putative S-adenosyl-L-methionine-dependent methyltransferase MMAR_4570 from Mycobacterium marinum (strain ATCC BAA-535 / M).